The chain runs to 463 residues: uncharacterized protein (463 aa).

The next 11 helical transmembrane spans lie at 6-26, 31-51, 60-80, 101-123, 130-152, 189-209, 242-262, 269-289, 304-324, 413-433, and 443-463; these read ILPVHVLYVFFIGAIILFMLL, TFISLFGIFIISLWASHSLSA, FIYAAGELLPTIFIICFIVSM, VRGPVTAYWLIGGLMFAISLFFW, LIGAVLLPAAARAGLTPLAAAMA, ASIPLVLIMGVTTTTAAFIMI, SILAFLIPLAFLADIACMLLF, ATALIGGSAICILFTVHFFVY, GFKFGFKVFGPVIPIAAFFYL, AIWVGGGTLVPWALIPAAAIC, and KNFIPVAIGLLVTTLAAVMML.

Its subcellular location is the cell membrane. This is an uncharacterized protein from Bacillus subtilis (strain 168).